The chain runs to 493 residues: 11S globulin seed storage protein G3 (493 aa).

The signal sequence occupies residues 1–20 (MASKATLLLAFTLLFATCIA). 2 disulfide bridges follow: Cys-32/Cys-65 and Cys-103/Cys-312. One can recognise a Cupin type-1 1 domain in the interval 37-248 (IEALEPIEVI…SFNVDQETAQ (212 aa)). Disordered stretches follow at residues 190-229 (PQAQ…NIFN) and 269-305 (IVRP…GWSN). 2 stretches are compositionally biased toward low complexity: residues 191 to 221 (QAQA…QGQG) and 280 to 298 (RQQQ…QQQG). In terms of domain architecture, Cupin type-1 2 spans 318–467 (VNIDNPSQAD…RYQLSREEAQ (150 aa)).

It belongs to the 11S seed storage protein (globulins) family. As to quaternary structure, hexamer; each subunit is composed of an acidic and a basic chain derived from a single precursor and linked by a disulfide bond.

This is a seed storage protein. In Helianthus annuus (Common sunflower), this protein is 11S globulin seed storage protein G3 (HAG3).